An 874-amino-acid chain; its full sequence is Alanine--tRNA ligase (874 aa).

Zn(2+) contacts are provided by histidine 562, histidine 566, cysteine 665, and histidine 669.

Belongs to the class-II aminoacyl-tRNA synthetase family. Zn(2+) serves as cofactor.

The protein resides in the cytoplasm. The catalysed reaction is tRNA(Ala) + L-alanine + ATP = L-alanyl-tRNA(Ala) + AMP + diphosphate. Catalyzes the attachment of alanine to tRNA(Ala) in a two-step reaction: alanine is first activated by ATP to form Ala-AMP and then transferred to the acceptor end of tRNA(Ala). Also edits incorrectly charged Ser-tRNA(Ala) and Gly-tRNA(Ala) via its editing domain. This chain is Alanine--tRNA ligase, found in Pseudomonas entomophila (strain L48).